Reading from the N-terminus, the 126-residue chain is Large ribosomal subunit protein uL22 (126 aa).

This sequence belongs to the universal ribosomal protein uL22 family. Part of the 50S ribosomal subunit.

Its function is as follows. This protein binds specifically to 23S rRNA; its binding is stimulated by other ribosomal proteins, e.g. L4, L17, and L20. It is important during the early stages of 50S assembly. It makes multiple contacts with different domains of the 23S rRNA in the assembled 50S subunit and ribosome. Functionally, the globular domain of the protein is located near the polypeptide exit tunnel on the outside of the subunit, while an extended beta-hairpin is found that lines the wall of the exit tunnel in the center of the 70S ribosome. In Dinoroseobacter shibae (strain DSM 16493 / NCIMB 14021 / DFL 12), this protein is Large ribosomal subunit protein uL22.